Here is a 360-residue protein sequence, read N- to C-terminus: Phosphoserine aminotransferase (360 aa).

Position 41 (Arg41) interacts with L-glutamate. Pyridoxal 5'-phosphate-binding residues include Trp101, Thr152, Asp172, and Gln195. Residue Lys196 is modified to N6-(pyridoxal phosphate)lysine. Residue 237-238 (NT) participates in pyridoxal 5'-phosphate binding.

Belongs to the class-V pyridoxal-phosphate-dependent aminotransferase family. SerC subfamily. In terms of assembly, homodimer. It depends on pyridoxal 5'-phosphate as a cofactor.

It localises to the cytoplasm. The catalysed reaction is O-phospho-L-serine + 2-oxoglutarate = 3-phosphooxypyruvate + L-glutamate. It carries out the reaction 4-(phosphooxy)-L-threonine + 2-oxoglutarate = (R)-3-hydroxy-2-oxo-4-phosphooxybutanoate + L-glutamate. It functions in the pathway amino-acid biosynthesis; L-serine biosynthesis; L-serine from 3-phospho-D-glycerate: step 2/3. It participates in cofactor biosynthesis; pyridoxine 5'-phosphate biosynthesis; pyridoxine 5'-phosphate from D-erythrose 4-phosphate: step 3/5. In terms of biological role, catalyzes the reversible conversion of 3-phosphohydroxypyruvate to phosphoserine and of 3-hydroxy-2-oxo-4-phosphonooxybutanoate to phosphohydroxythreonine. In Burkholderia cenocepacia (strain ATCC BAA-245 / DSM 16553 / LMG 16656 / NCTC 13227 / J2315 / CF5610) (Burkholderia cepacia (strain J2315)), this protein is Phosphoserine aminotransferase.